The chain runs to 352 residues: Serine/threonine-protein phosphatase 2A activator 2 (352 aa).

The protein belongs to the PTPA-type PPIase family.

It is found in the cytoplasm. It carries out the reaction [protein]-peptidylproline (omega=180) = [protein]-peptidylproline (omega=0). Its function is as follows. PPIases accelerate the folding of proteins. It catalyzes the cis-trans isomerization of proline imidic peptide bonds in oligopeptides. Acts as a regulatory subunit for PP2A-like phosphatases modulating their activity or substrate specificity, probably by inducing a conformational change in the catalytic subunit, a direct target of the PPIase. Can reactivate inactive phosphatase PP2A-phosphatase methylesterase complexes (PP2Ai) in presence of ATP and Mg(2+) by dissociating the inactive form from the complex. This is Serine/threonine-protein phosphatase 2A activator 2 (rrd2) from Schizosaccharomyces pombe (strain 972 / ATCC 24843) (Fission yeast).